A 492-amino-acid chain; its full sequence is Glycosyltransferase alg8 (492 aa).

4 consecutive transmembrane segments (helical) span residues Gly-13–Val-32, Ile-47–Val-69, Leu-379–Val-401, and Pro-421–Phe-443.

Belongs to the glycosyltransferase 2 family.

The protein resides in the cell membrane. It participates in glycan biosynthesis; alginate biosynthesis. Possibly a processive enzyme that polymerizes GDP-mannuronic acid. In Azotobacter vinelandii, this protein is Glycosyltransferase alg8 (alg8).